A 103-amino-acid polypeptide reads, in one-letter code: SLC35A4 upstream open reading frame protein (103 aa).

The chain crosses the membrane as a helical span at residues 62 to 84 (ASAVLGFAVGTCTGIYAAQAYAV).

It localises to the mitochondrion inner membrane. In terms of biological role, required to maintain cellular respiration. The chain is SLC35A4 upstream open reading frame protein from Homo sapiens (Human).